Reading from the N-terminus, the 849-residue chain is Protein translocase subunit SecA (849 aa).

ATP is bound by residues Gln85, 103-107 (GEGKT), and Asp493. Zn(2+) contacts are provided by Cys832, Cys834, Cys843, and His844.

It belongs to the SecA family. As to quaternary structure, monomer and homodimer. Part of the essential Sec protein translocation apparatus which comprises SecA, SecYEG and auxiliary proteins SecDF. Other proteins may also be involved. Zn(2+) serves as cofactor.

Its subcellular location is the cell membrane. It is found in the cytoplasm. The enzyme catalyses ATP + H2O + cellular proteinSide 1 = ADP + phosphate + cellular proteinSide 2.. Functionally, part of the Sec protein translocase complex. Interacts with the SecYEG preprotein conducting channel. Has a central role in coupling the hydrolysis of ATP to the transfer of proteins into and across the cell membrane, serving as an ATP-driven molecular motor driving the stepwise translocation of polypeptide chains across the membrane. This chain is Protein translocase subunit SecA, found in Streptococcus thermophilus (strain CNRZ 1066).